The primary structure comprises 289 residues: Diaminopimelate epimerase (289 aa).

The substrate site is built by Asn-17, Gln-47, and Asn-67. Cys-76 acts as the Proton donor in catalysis. Substrate contacts are provided by residues Gly-77 to Asn-78, Asn-164, Asn-198, and Glu-216 to Arg-217. The active-site Proton acceptor is Cys-225. Gly-226–Ser-227 contacts substrate.

The protein belongs to the diaminopimelate epimerase family. As to quaternary structure, homodimer.

It localises to the cytoplasm. It carries out the reaction (2S,6S)-2,6-diaminopimelate = meso-2,6-diaminopimelate. It participates in amino-acid biosynthesis; L-lysine biosynthesis via DAP pathway; DL-2,6-diaminopimelate from LL-2,6-diaminopimelate: step 1/1. Its function is as follows. Catalyzes the stereoinversion of LL-2,6-diaminopimelate (L,L-DAP) to meso-diaminopimelate (meso-DAP), a precursor of L-lysine and an essential component of the bacterial peptidoglycan. The sequence is that of Diaminopimelate epimerase from Bradyrhizobium sp. (strain ORS 278).